The chain runs to 258 residues: NAD-capped RNA hydrolase NudC (258 aa).

A substrate-binding site is contributed by R69. Zn(2+)-binding residues include C98 and C101. E111 provides a ligand contact to substrate. Zn(2+)-binding residues include C116 and C119. Residue Y124 participates in substrate binding. Residues 125-248 form the Nudix hydrolase domain; that stretch reads PQIAPCIIVA…TVARRLIEDT (124 aa). Residues A158, E174, and E178 each contribute to the a divalent metal cation site. Positions 159 to 180 match the Nudix box motif; that stretch reads GFVEVGETLEQTVAREVMEESG. 192 to 199 serves as a coordination point for substrate; it reads QPWPFPMS. E219 is a binding site for a divalent metal cation. A241 lines the substrate pocket.

The protein belongs to the Nudix hydrolase family. NudC subfamily. As to quaternary structure, homodimer. Requires Mg(2+) as cofactor. It depends on Mn(2+) as a cofactor. The cofactor is Zn(2+).

It catalyses the reaction a 5'-end NAD(+)-phospho-ribonucleoside in mRNA + H2O = a 5'-end phospho-adenosine-phospho-ribonucleoside in mRNA + beta-nicotinamide D-ribonucleotide + 2 H(+). The enzyme catalyses NAD(+) + H2O = beta-nicotinamide D-ribonucleotide + AMP + 2 H(+). It carries out the reaction NADH + H2O = reduced beta-nicotinamide D-ribonucleotide + AMP + 2 H(+). Its function is as follows. mRNA decapping enzyme that specifically removes the nicotinamide adenine dinucleotide (NAD) cap from a subset of mRNAs by hydrolyzing the diphosphate linkage to produce nicotinamide mononucleotide (NMN) and 5' monophosphate mRNA. The NAD-cap is present at the 5'-end of some mRNAs and stabilizes RNA against 5'-processing. Has preference for mRNAs with a 5'-end purine. Catalyzes the hydrolysis of a broad range of dinucleotide pyrophosphates. The chain is NAD-capped RNA hydrolase NudC from Enterobacter sp. (strain 638).